The chain runs to 168 residues: ATP synthase subunit b (168 aa).

The helical transmembrane segment at 9–29 (SIPFGTIAYTLFIFLLLLVML) threads the bilayer.

The protein belongs to the ATPase B chain family. As to quaternary structure, F-type ATPases have 2 components, F(1) - the catalytic core - and F(0) - the membrane proton channel. F(1) has five subunits: alpha(3), beta(3), gamma(1), delta(1), epsilon(1). F(0) has three main subunits: a(1), b(2) and c(10-14). The alpha and beta chains form an alternating ring which encloses part of the gamma chain. F(1) is attached to F(0) by a central stalk formed by the gamma and epsilon chains, while a peripheral stalk is formed by the delta and b chains.

The protein localises to the cell membrane. Functionally, f(1)F(0) ATP synthase produces ATP from ADP in the presence of a proton or sodium gradient. F-type ATPases consist of two structural domains, F(1) containing the extramembraneous catalytic core and F(0) containing the membrane proton channel, linked together by a central stalk and a peripheral stalk. During catalysis, ATP synthesis in the catalytic domain of F(1) is coupled via a rotary mechanism of the central stalk subunits to proton translocation. Its function is as follows. Component of the F(0) channel, it forms part of the peripheral stalk, linking F(1) to F(0). This is ATP synthase subunit b from Bacillus cereus (strain B4264).